Consider the following 165-residue polypeptide: Crossover junction endodeoxyribonuclease RuvC (165 aa).

Residues Asp-8, Glu-66, and Asp-138 contribute to the active site. Residues Asp-8, Glu-66, and Asp-138 each contribute to the Mg(2+) site.

Belongs to the RuvC family. In terms of assembly, homodimer which binds Holliday junction (HJ) DNA. The HJ becomes 2-fold symmetrical on binding to RuvC with unstacked arms; it has a different conformation from HJ DNA in complex with RuvA. In the full resolvosome a probable DNA-RuvA(4)-RuvB(12)-RuvC(2) complex forms which resolves the HJ. The cofactor is Mg(2+).

The protein localises to the cytoplasm. The catalysed reaction is Endonucleolytic cleavage at a junction such as a reciprocal single-stranded crossover between two homologous DNA duplexes (Holliday junction).. Its function is as follows. The RuvA-RuvB-RuvC complex processes Holliday junction (HJ) DNA during genetic recombination and DNA repair. Endonuclease that resolves HJ intermediates. Cleaves cruciform DNA by making single-stranded nicks across the HJ at symmetrical positions within the homologous arms, yielding a 5'-phosphate and a 3'-hydroxyl group; requires a central core of homology in the junction. The consensus cleavage sequence is 5'-(A/T)TT(C/G)-3'. Cleavage occurs on the 3'-side of the TT dinucleotide at the point of strand exchange. HJ branch migration catalyzed by RuvA-RuvB allows RuvC to scan DNA until it finds its consensus sequence, where it cleaves and resolves the cruciform DNA. The chain is Crossover junction endodeoxyribonuclease RuvC from Methylococcus capsulatus (strain ATCC 33009 / NCIMB 11132 / Bath).